We begin with the raw amino-acid sequence, 417 residues long: MIDPEILVNTPDIVRLSQKKRGESQSIVEDALIARRNLRIAINNFETLRAEQNVLSKKIAGSEDSDRPELMRVANLLAERVKNAREEQEKANSEWKKLLFEIPNIVSSEAPYGVEDKCAVMKTVGDIPEFDFEPADHLQLGEQLDAIDVSRGVKVSGTRFYFLKGWGARLELAVMNLALDLALKSGLTLLITPTLVKPEIMLGTGFLGRHEGEVYRLPSGYYLTGTSEVAIAGYHSDEILDISSGPIRYAGWSSCYRREAGSHGRDTRGIMRVHQFSKLEMFSYVHPQQSTRELEHIVSMQEKMLNLLEIPYRVSDIAAEELGTSASRKYDLEAWIPSQNTWREVTSASDCTTFQARRLNVRYRDESGRTGYVATLNGTLATTRFLVAILENHQTSNGSIRVPEALRPLLGQDVIER.

L-serine is bound at residue 226–228 (TSE). Residues 257–259 (RRE) and V273 contribute to the ATP site. E280 contacts L-serine. 344–347 (EVTS) is an ATP binding site. Residue T379 coordinates L-serine.

This sequence belongs to the class-II aminoacyl-tRNA synthetase family. Type-1 seryl-tRNA synthetase subfamily. As to quaternary structure, homodimer. The tRNA molecule binds across the dimer.

It is found in the cytoplasm. The catalysed reaction is tRNA(Ser) + L-serine + ATP = L-seryl-tRNA(Ser) + AMP + diphosphate + H(+). It catalyses the reaction tRNA(Sec) + L-serine + ATP = L-seryl-tRNA(Sec) + AMP + diphosphate + H(+). It participates in aminoacyl-tRNA biosynthesis; selenocysteinyl-tRNA(Sec) biosynthesis; L-seryl-tRNA(Sec) from L-serine and tRNA(Sec): step 1/1. Its function is as follows. Catalyzes the attachment of serine to tRNA(Ser). Is also able to aminoacylate tRNA(Sec) with serine, to form the misacylated tRNA L-seryl-tRNA(Sec), which will be further converted into selenocysteinyl-tRNA(Sec). This chain is Serine--tRNA ligase, found in Tropheryma whipplei (strain TW08/27) (Whipple's bacillus).